Consider the following 166-residue polypeptide: NAD(P)H-quinone oxidoreductase subunit I, chloroplastic (166 aa).

2 4Fe-4S ferredoxin-type domains span residues 55–84 and 95–124; these read GRIHFEFDKCIACEVCVRVCPIDLPVVDWK and LNYSIDFGICIFCGNCVEYCPTNCLSMTEE. [4Fe-4S] cluster-binding residues include cysteine 64, cysteine 67, cysteine 70, cysteine 74, cysteine 104, cysteine 107, cysteine 110, and cysteine 114.

This sequence belongs to the complex I 23 kDa subunit family. In terms of assembly, NDH is composed of at least 16 different subunits, 5 of which are encoded in the nucleus. It depends on [4Fe-4S] cluster as a cofactor.

It localises to the plastid. The protein resides in the chloroplast thylakoid membrane. The enzyme catalyses a plastoquinone + NADH + (n+1) H(+)(in) = a plastoquinol + NAD(+) + n H(+)(out). The catalysed reaction is a plastoquinone + NADPH + (n+1) H(+)(in) = a plastoquinol + NADP(+) + n H(+)(out). NDH shuttles electrons from NAD(P)H:plastoquinone, via FMN and iron-sulfur (Fe-S) centers, to quinones in the photosynthetic chain and possibly in a chloroplast respiratory chain. The immediate electron acceptor for the enzyme in this species is believed to be plastoquinone. Couples the redox reaction to proton translocation, and thus conserves the redox energy in a proton gradient. This chain is NAD(P)H-quinone oxidoreductase subunit I, chloroplastic, found in Chaetymenia peduncularis (Daisy).